Reading from the N-terminus, the 186-residue chain is Large ribosomal subunit protein bL12c (186 aa).

Residues 1–11 (MASTLSTITLR) are compositionally biased toward polar residues. Residues 1–24 (MASTLSTITLRSPSPSTATSTHAS) form a disordered region. Residues 1–53 (MASTLSTITLRSPSPSTATSTHASIPFPKKTLEFPIRTPKLQNRRATFLRPLA) constitute a chloroplast transit peptide. Over residues 12–24 (SPSPSTATSTHAS) the composition is skewed to low complexity.

This sequence belongs to the bacterial ribosomal protein bL12 family.

Its subcellular location is the plastid. The protein localises to the chloroplast. The chain is Large ribosomal subunit protein bL12c from Nicotiana sylvestris (Wood tobacco).